Here is a 493-residue protein sequence, read N- to C-terminus: Phospholipid transfer protein (493 aa).

Positions 1-17 (MVLLWALFLALLAGAHA) are cleaved as a signal peptide. N-linked (GlcNAc...) asparagine glycosylation is found at Asn-64, Asn-91, Asn-94, Asn-117, and Asn-143. An intrachain disulfide couples Cys-146 to Cys-185. N-linked (GlcNAc...) asparagine glycosylation is found at Asn-245 and Asn-398.

It belongs to the BPI/LBP/Plunc superfamily. BPI/LBP family. Post-translationally, glycosylation is necessary for secretion and its phospholipid transfer activity. As to expression, highest level expression in the lung, brain and heart with relatively low levels in the liver, skeletal muscle and testis and very low levels found in the spleen and kidney.

The protein localises to the secreted. It is found in the nucleus. It carries out the reaction a 1,2-diacyl-sn-glycero-3-phosphocholine(in) = a 1,2-diacyl-sn-glycero-3-phosphocholine(out). The catalysed reaction is a 1,2-diacyl-sn-glycero-3-phosphoethanolamine(in) = a 1,2-diacyl-sn-glycero-3-phosphoethanolamine(out). The enzyme catalyses a 1,2-diacyl-sn-glycerol(in) = a 1,2-diacyl-sn-glycerol(out). It catalyses the reaction a 1,2-diacyl-sn-glycero-3-phosphate(in) = a 1,2-diacyl-sn-glycero-3-phosphate(out). It carries out the reaction a sphingomyelin(in) = a sphingomyelin(out). The catalysed reaction is a 1,2-diacyl-sn-glycero-3-phospho-(1'-sn-glycerol)(in) = a 1,2-diacyl-sn-glycero-3-phospho-(1'-sn-glycerol)(out). The enzyme catalyses a 1,2-diacyl-sn-glycero-3-phospho-(1D-myo-inositol)(in) = a 1,2-diacyl-sn-glycero-3-phospho-(1D-myo-inositol)(out). It catalyses the reaction 1-hexadecanoyl-2-(5Z,8Z,11Z,14Z-eicosatetraenoyl)-sn-glycero-3-phosphoethanolamine(in) = 1-hexadecanoyl-2-(5Z,8Z,11Z,14Z-eicosatetraenoyl)-sn-glycero-3-phosphoethanolamine(out). It carries out the reaction N-(hexadecanoyl)-sphing-4-enine-1-phosphocholine(in) = N-(hexadecanoyl)-sphing-4-enine-1-phosphocholine(out). The catalysed reaction is 1,2-dihexadecanoyl-sn-glycero-3-phosphocholine(in) = 1,2-dihexadecanoyl-sn-glycero-3-phosphocholine(out). Its function is as follows. Mediates the transfer of phospholipids and free cholesterol from triglyceride-rich lipoproteins (low density lipoproteins or LDL and very low density lipoproteins or VLDL) into high-density lipoproteins (HDL) as well as the exchange of phospholipids between triglyceride-rich lipoproteins themselves. Facilitates the transfer of a spectrum of different lipid molecules, including sphingomyelin, phosphatidylcholine, phosphatidylinositol, phosphatidylglycerol, and phosphatidyl ethanolamine. Plays an important role in HDL remodeling which involves modulating the size and composition of HDL. Also plays a key role in the uptake of cholesterol from peripheral cells and tissues that is subsequently transported to the liver for degradation and excretion. Two distinct forms of PLTP exist in plasma: an active form that can transfer phosphatidylcholine from phospholipid vesicles to HDL, and an inactive form that lacks this capability. The protein is Phospholipid transfer protein (Pltp) of Mus musculus (Mouse).